The chain runs to 600 residues: Alanine--tRNA ligase (600 aa).

Residues histidine 463, histidine 467, cysteine 565, and histidine 569 each contribute to the Zn(2+) site.

Belongs to the class-II aminoacyl-tRNA synthetase family. It depends on Zn(2+) as a cofactor.

It is found in the cytoplasm. It carries out the reaction tRNA(Ala) + L-alanine + ATP = L-alanyl-tRNA(Ala) + AMP + diphosphate. Catalyzes the attachment of alanine to tRNA(Ala) in a two-step reaction: alanine is first activated by ATP to form Ala-AMP and then transferred to the acceptor end of tRNA(Ala). Also edits incorrectly charged Ser-tRNA(Ala) and Gly-tRNA(Ala) via its editing domain. The sequence is that of Alanine--tRNA ligase (alaS) from Treponema denticola (strain ATCC 35405 / DSM 14222 / CIP 103919 / JCM 8153 / KCTC 15104).